The sequence spans 430 residues: MANVAVVGSQWGDEGKGKIVDWLSERADVVVRFQGGHNAGHTLVIDGVTYKLSLLPSGIVRKGKLSILGNGVVLDPWAFAKEVDEIASKGVAVTPDNLKIAENAVLILPVHRELDEMREGANSGVKIGTTKRGIGPAYEDKAGRRAIRVIDLADPSTLTIKVEGLLAHHNALRRGNRLEELEAGPIVEALKEIAPRVLPFVAPVWNVLDEAKRKGQRILFEGAQGTMLDVDHGTYPFVTSSNTVAGQAAGGSGVGPGAIGFVLGITKAYTTRVGEGPFPTELTDEVGQRLGERGHEFGTVTGRKRRCGWFDAVMVRQAIKTGGITGIALTKLDVLDGFDEIKVCTSYEIDGKLVDHLPAGMDAQAKVTPIYETLEGWKDSTQGARSWAQLPAAAVKYVRYVEELIEAPVALLSTSPERDDTILMKDPFED.

GTP is bound by residues 12–18 (GDEGKGK) and 40–42 (GHT). D13 (proton acceptor) is an active-site residue. Residues D13 and G40 each contribute to the Mg(2+) site. IMP contacts are provided by residues 13-16 (DEGK), 38-41 (NAGH), T130, R144, Q224, T239, and R303. H41 acts as the Proton donor in catalysis. 299-305 (TVTGRKR) is a substrate binding site. GTP is bound by residues R305, 331–333 (KLD), and 413–415 (STS).

This sequence belongs to the adenylosuccinate synthetase family. In terms of assembly, homodimer. Mg(2+) serves as cofactor.

Its subcellular location is the cytoplasm. The catalysed reaction is IMP + L-aspartate + GTP = N(6)-(1,2-dicarboxyethyl)-AMP + GDP + phosphate + 2 H(+). Its pathway is purine metabolism; AMP biosynthesis via de novo pathway; AMP from IMP: step 1/2. Functionally, plays an important role in the de novo pathway of purine nucleotide biosynthesis. Catalyzes the first committed step in the biosynthesis of AMP from IMP. The protein is Adenylosuccinate synthetase of Parvibaculum lavamentivorans (strain DS-1 / DSM 13023 / NCIMB 13966).